The primary structure comprises 118 residues: NADH-quinone oxidoreductase subunit A (118 aa).

Transmembrane regions (helical) follow at residues 6 to 26, 64 to 84, and 87 to 107; these read LPVL…LLMG, AILF…AVVF, and IGMT…VGFI.

It belongs to the complex I subunit 3 family. NDH-1 is composed of 14 different subunits. Subunits NuoA, H, J, K, L, M, N constitute the membrane sector of the complex.

It is found in the cell inner membrane. The enzyme catalyses a quinone + NADH + 5 H(+)(in) = a quinol + NAD(+) + 4 H(+)(out). NDH-1 shuttles electrons from NADH, via FMN and iron-sulfur (Fe-S) centers, to quinones in the respiratory chain. The immediate electron acceptor for the enzyme in this species is believed to be ubiquinone. Couples the redox reaction to proton translocation (for every two electrons transferred, four hydrogen ions are translocated across the cytoplasmic membrane), and thus conserves the redox energy in a proton gradient. In Acidithiobacillus ferrooxidans (strain ATCC 53993 / BNL-5-31) (Leptospirillum ferrooxidans (ATCC 53993)), this protein is NADH-quinone oxidoreductase subunit A.